The primary structure comprises 158 residues: Endoribonuclease YbeY (158 aa).

Positions 117, 121, and 127 each coordinate Zn(2+).

The protein belongs to the endoribonuclease YbeY family. Zn(2+) is required as a cofactor.

The protein resides in the cytoplasm. In terms of biological role, single strand-specific metallo-endoribonuclease involved in late-stage 70S ribosome quality control and in maturation of the 3' terminus of the 16S rRNA. The sequence is that of Endoribonuclease YbeY from Psychromonas ingrahamii (strain DSM 17664 / CCUG 51855 / 37).